A 494-amino-acid polypeptide reads, in one-letter code: 3-octaprenyl-4-hydroxybenzoate carboxy-lyase (494 aa).

Residue Asn172 participates in Mn(2+) binding. Prenylated FMN is bound by residues 175–177 (IYR), 189–191 (RWL), and 194–195 (RG). Residue Glu238 participates in Mn(2+) binding. The active-site Proton donor is Asp287.

The protein belongs to the UbiD family. In terms of assembly, homohexamer. The cofactor is prenylated FMN. Mn(2+) is required as a cofactor.

It is found in the cell membrane. It catalyses the reaction a 4-hydroxy-3-(all-trans-polyprenyl)benzoate + H(+) = a 2-(all-trans-polyprenyl)phenol + CO2. Its pathway is cofactor biosynthesis; ubiquinone biosynthesis. Catalyzes the decarboxylation of 3-octaprenyl-4-hydroxy benzoate to 2-octaprenylphenol, an intermediate step in ubiquinone biosynthesis. The chain is 3-octaprenyl-4-hydroxybenzoate carboxy-lyase from Shigella flexneri serotype 5b (strain 8401).